Here is a 377-residue protein sequence, read N- to C-terminus: tRNA-specific 2-thiouridylase MnmA (377 aa).

Residues 8-15 (GMSGGVDS) and Met34 contribute to the ATP site. Positions 94-96 (NPD) are interaction with target base in tRNA. The active-site Nucleophile is the Cys99. An intrachain disulfide couples Cys99 to Cys201. Gly123 contacts ATP. The segment at 151 to 153 (KDQ) is interaction with tRNA. The Cysteine persulfide intermediate role is filled by Cys201. Residues 315–316 (RY) are interaction with tRNA.

The protein belongs to the MnmA/TRMU family.

It localises to the cytoplasm. The enzyme catalyses S-sulfanyl-L-cysteinyl-[protein] + uridine(34) in tRNA + AH2 + ATP = 2-thiouridine(34) in tRNA + L-cysteinyl-[protein] + A + AMP + diphosphate + H(+). Functionally, catalyzes the 2-thiolation of uridine at the wobble position (U34) of tRNA, leading to the formation of s(2)U34. The sequence is that of tRNA-specific 2-thiouridylase MnmA from Acinetobacter baylyi (strain ATCC 33305 / BD413 / ADP1).